The chain runs to 33 residues: Tail virion protein G7P (33 aa).

Residues I10–G30 traverse the membrane as a helical segment.

It belongs to the inovirus G7P protein family.

It is found in the virion. Its subcellular location is the host membrane. Functionally, may initiate with G9P the virion concomitant assembly-budding process, by interacting with the packaging signal of the viral genome. The assembly-budding takes place at the host inner membrane. In turn, G7P and G9P are present at the end of the filamentous virion that emerges first from the bacterial host. The polypeptide is Tail virion protein G7P (VII) (Escherichia coli (Bacteriophage f1)).